A 268-amino-acid chain; its full sequence is Unknown seed protein USP (268 aa).

The N-terminal stretch at 1-25 (MEFAHLTVLSLFCLAFVGITATSSG) is a signal peptide. The 192-residue stretch at 68-259 (LFFEHDLHPG…GNKAAAWVPN (192 aa)) folds into the BURP domain.

In terms of tissue distribution, expressed in seeds. Detected only in the embryo. In germinating seedlings, detected in roots, root caps, root hairs, vascular bundle, mesophyll cells and epidermal cells of the cotyledons and the hypocotyl.

The protein localises to the golgi apparatus. It is found in the golgi stack. Its subcellular location is the prevacuolar compartment. Associated with the protein storage vacuole formation. The chain is Unknown seed protein USP from Vicia faba (Broad bean).